Consider the following 123-residue polypeptide: Large ribosomal subunit protein uL18 (123 aa).

It belongs to the universal ribosomal protein uL18 family. As to quaternary structure, part of the 50S ribosomal subunit; part of the 5S rRNA/L5/L18/L25 subcomplex. Contacts the 5S and 23S rRNAs.

Functionally, this is one of the proteins that bind and probably mediate the attachment of the 5S RNA into the large ribosomal subunit, where it forms part of the central protuberance. The chain is Large ribosomal subunit protein uL18 from Bifidobacterium adolescentis (strain ATCC 15703 / DSM 20083 / NCTC 11814 / E194a).